A 277-amino-acid polypeptide reads, in one-letter code: Tumor necrosis factor receptor superfamily member 4 (277 aa).

A signal peptide spans M1–G28. Topologically, residues L29–A214 are extracellular. TNFR-Cys repeat units follow at residues H30 to R65 and P66 to C107. 8 disulfide bridges follow: C31/C42, C43/C56, C46/C64, C67/C81, C84/C99, C87/C107, C109/C125, and C128/C141. One copy of the TNFR-Cys 3; truncated repeat lies at R108–A126. The stretch at P127–E167 is one TNFR-Cys 4 repeat. N-linked (GlcNAc...) asparagine glycans are attached at residues N146 and N160. Residues C147 and C166 are joined by a disulfide bond. The interval A158–V209 is disordered. The helical transmembrane segment at V215 to L235 threads the bilayer. The Cytoplasmic segment spans residues A236–I277. The tract at residues P248–I277 is disordered.

Interacts with TRAF2, TRAF3 and TRAF5. In terms of assembly, (Microbial infection) Interacts with Human herpesvirus 6B/HHV-6B gQ1:gQ2 proteins.

It localises to the membrane. Its function is as follows. Receptor for TNFSF4/OX40L/GP34. Is a costimulatory molecule implicated in long-term T-cell immunity. Functionally, (Microbial infection) Acts as a receptor for human herpesvirus 6B/HHV-6B. The sequence is that of Tumor necrosis factor receptor superfamily member 4 (TNFRSF4) from Homo sapiens (Human).